The following is a 1219-amino-acid chain: Regulator of telomere elongation helicase 1 (1219 aa).

The 290-residue stretch at 7 to 296 (NGVTVDFPFQ…TKAAQQGEPH (290 aa)) folds into the Helicase ATP-binding domain. Residue 42–49 (SPTGTGKT) coordinates ATP. Residues Cys145, Cys163, Cys172, and Cys207 each contribute to the [4Fe-4S] cluster site. The Nuclear localization signal signature appears at 151-167 (KKQESNHLQIHLCRKKV). A DEAH box motif is present at residues 250-253 (DEAH). Disordered regions lie at residues 287 to 306 (TKAA…SPSP), 757 to 786 (PAPA…FFST), 839 to 877 (EHSE…GRKK), 979 to 1005 (RPEH…PDPK), 1017 to 1054 (DPQE…RAGK), 1132 to 1151 (CTDL…PQEE), and 1159 to 1219 (LTHR…EWGL). Low complexity predominate over residues 757–766 (PAPAPRATAP). Residues 863-873 (SEKRPAEEPRG) show a composition bias toward basic and acidic residues. The short motif at 871–877 (PRGGRKK) is the Nuclear localization signal element. Residues 1176–1185 (KTQSKISSFL) show a composition bias toward polar residues. Positions 1178 to 1185 (QSKISSFL) match the PIP-box motif. The segment covering 1200–1219 (AGPSQSSGPPHGPAASEWGL) has biased composition (low complexity).

This sequence belongs to the helicase family. RAD3/XPD subfamily. In terms of assembly, interacts with TERF1. Interacts (via PIP-box) with PCNA; the interaction is direct and essential for suppressing telomere fragility. Interacts with MMS19; the interaction mediates the association of RTEL1 with the cytosolic iron-sulfur protein assembly (CIA) complex.

It is found in the nucleus. The catalysed reaction is ATP + H2O = ADP + phosphate + H(+). Its function is as follows. A probable ATP-dependent DNA helicase implicated in telomere-length regulation, DNA repair and the maintenance of genomic stability. Acts as an anti-recombinase to counteract toxic recombination and limit crossover during meiosis. Regulates meiotic recombination and crossover homeostasis by physically dissociating strand invasion events and thereby promotes noncrossover repair by meiotic synthesis dependent strand annealing (SDSA) as well as disassembly of D loop recombination intermediates. Also disassembles T loops and prevents telomere fragility by counteracting telomeric G4-DNA structures, which together ensure the dynamics and stability of the telomere. In Homo sapiens (Human), this protein is Regulator of telomere elongation helicase 1.